Here is a 618-residue protein sequence, read N- to C-terminus: Beta-xylosidase (618 aa).

Disordered regions lie at residues 76 to 100 and 463 to 509; these read ERDRYTTDESDSGSSERHSVQQEES and LEPQ…PPIQ.

The protein belongs to the glycosyl hydrolase 52 family.

The protein localises to the secreted. It catalyses the reaction Hydrolysis of (1-&gt;4)-beta-D-xylans, to remove successive D-xylose residues from the non-reducing termini.. Its pathway is glycan degradation; xylan degradation. The protein is Beta-xylosidase (xylA) of Geobacillus stearothermophilus (Bacillus stearothermophilus).